We begin with the raw amino-acid sequence, 461 residues long: Coagulation factor IX (461 aa).

The N-terminal stretch at 1–28 is a signal peptide; the sequence is MQRVNMIMAESPGLITICLLGYLLSAEC. A propeptide spanning residues 29-46 is cleaved from the precursor; it reads TVFLDHENANKILNRPKR. Tyr-47, Asn-48, Glu-53, Glu-54, Glu-61, Glu-63, Glu-66, Glu-67, Glu-72, Glu-73, and Glu-76 together coordinate Ca(2+). Residues 47–92 enclose the Gla domain; the sequence is YNSGKLEEFVQGNLERECMEEKCSFEEAREVFENTERTTEFWKQYV. Glu-53, Glu-54, Glu-61, Glu-63, Glu-66, Glu-67, Glu-72, Glu-73, Glu-76, Glu-79, and Glu-82 each carry 4-carboxyglutamate. Residue Glu-61 participates in Mg(2+) binding. A disulfide bridge connects residues Cys-64 and Cys-69. Glu-66 serves as a coordination point for Mg(2+). Glu-72 serves as a coordination point for Mg(2+). Residue Glu-76 participates in Mg(2+) binding. A Ca(2+)-binding site is contributed by Glu-82. Glu-82 is a Mg(2+) binding site. The O-linked (GalNAc...) threonine glycan is linked to Thr-85. Residues Glu-86, Asp-93, Gly-94, and Gln-96 each coordinate Ca(2+). A 4-carboxyglutamate modification is found at Glu-86. Glu-86 serves as a coordination point for Mg(2+). The EGF-like 1; calcium-binding domain maps to 93-129; it reads DGDQCESNPCLNGGSCKDDINSYECWCPFGFEGKNCE. 10 disulfide bridges follow: Cys-97–Cys-108, Cys-102–Cys-117, Cys-119–Cys-128, Cys-134–Cys-145, Cys-141–Cys-155, Cys-157–Cys-170, Cys-178–Cys-335, Cys-252–Cys-268, Cys-382–Cys-396, and Cys-407–Cys-435. O-linked (Glc...) serine glycosylation occurs at Ser-99. Ser-107 is a glycosylation site (O-linked (Fuc...) serine). Residues Asp-110 and Asp-111 each coordinate Ca(2+). Asp-110 is subject to (3R)-3-hydroxyaspartate. Ser-114 is modified (phosphoserine). The EGF-like 2 domain occupies 130 to 171; sequence LDVTCNIKNGRCEQFCKNSADNKVVCSCTEGYRLAENQKSCE. Positions 192–226 are cleaved as a propeptide — activation peptide; that stretch reads AETVFPDVDYVNSTEAETILDNITQSTQSFNDFTR. Tyr-201 is modified (sulfotyrosine). Ser-204 carries the phosphoserine modification. The residue at position 205 (Thr-205) is a Phosphothreonine; alternate. O-linked (GalNAc...) threonine; alternate glycosylation is present at Thr-205. N-linked (GlcNAc...) asparagine glycosylation is present at Asn-213. 2 O-linked (GalNAc...) threonine glycosylation sites follow: Thr-215 and Thr-225. The region spanning 227 to 459 is the Peptidase S1 domain; the sequence is VVGGEDAKPG…YVNWIKEKTK (233 aa). Catalysis depends on His-267, which acts as the Charge relay system. The Ca(2+) site is built by Glu-281, Asn-283, Glu-286, Glu-288, and Glu-291. Residue Asp-315 is the Charge relay system of the active site. Ser-411 functions as the Charge relay system in the catalytic mechanism.

This sequence belongs to the peptidase S1 family. As to quaternary structure, heterodimer of a light chain and a heavy chain; disulfide-linked. Interacts (inactive and activated) with F11 (activated) in calcium-dependent manner. Interacts with SERPINC1. In terms of processing, activated by factor XIa, which excises the activation peptide. The propeptide can also be removed by snake venom protease. Post-translationally, the iron and 2-oxoglutarate dependent 3-hydroxylation of aspartate and asparagine is (R) stereospecific within EGF domains. Activated by coagulation factor VIIa-tissue factor (F7-F3) complex in calcium-dependent manner. Predominantly O-glucosylated at Ser-99 by POGLUT1 in vitro.

It localises to the secreted. It carries out the reaction Selective cleavage of Arg-|-Ile bond in factor X to form factor Xa.. Its function is as follows. Factor IX is a vitamin K-dependent plasma protein that participates in the intrinsic pathway of blood coagulation by converting factor X to its active form in the presence of Ca(2+) ions, phospholipids, and factor VIIIa. The chain is Coagulation factor IX (F9) from Pan troglodytes (Chimpanzee).